Consider the following 434-residue polypeptide: Adenylosuccinate synthetase (434 aa).

GTP is bound by residues 22 to 28 (GDEGKGK) and 50 to 52 (GHT). The active-site Proton acceptor is the Asp23. Positions 23 and 50 each coordinate Mg(2+). Residues 23-26 (DEGK), 48-51 (NAGH), Thr139, Arg153, Gln234, Thr249, and Arg313 contribute to the IMP site. His51 serves as the catalytic Proton donor. Position 309–315 (309–315 (ATTGRKR)) interacts with substrate. GTP-binding positions include Arg315, 341–343 (KLD), and 423–425 (SVG).

It belongs to the adenylosuccinate synthetase family. In terms of assembly, homodimer. Mg(2+) is required as a cofactor.

The protein resides in the cytoplasm. It carries out the reaction IMP + L-aspartate + GTP = N(6)-(1,2-dicarboxyethyl)-AMP + GDP + phosphate + 2 H(+). The protein operates within purine metabolism; AMP biosynthesis via de novo pathway; AMP from IMP: step 1/2. In terms of biological role, plays an important role in the de novo pathway of purine nucleotide biosynthesis. Catalyzes the first committed step in the biosynthesis of AMP from IMP. This chain is Adenylosuccinate synthetase, found in Chlorobium phaeobacteroides (strain DSM 266 / SMG 266 / 2430).